A 1032-amino-acid polypeptide reads, in one-letter code: FACT complex subunit ctc-2 (1032 aa).

The interval 446 to 513 (DEEEAQPTPK…QKEGLAKYAE (68 aa)) is disordered. Over residues 476-508 (LRSERNTTVDEDADKRRREHQKELAQKKQKEGL) the composition is skewed to basic and acidic residues. 4 coiled-coil regions span residues 485 to 506 (DEDADKRRREHQKELAQKKQKE), 624 to 658 (DRYADIANQISNLKRDAVKKEQEKKDMEDVVEQDK), 785 to 805 (RRRRAELDRLFKSFAEKIAEA), and 949 to 1010 (EVEE…RKAK). Residues 943 to 1032 (NDSDDDEVEE…ERAAPKKRRK (90 aa)) are disordered. 2 stretches are compositionally biased toward acidic residues: residues 944–979 (DSDDDEVEEEEEESAFEIDESELEDASESSEEDSEY) and 986–1004 (EASDEAEDSEEEEGEDWDE).

This sequence belongs to the peptidase M24 family. SPT16 subfamily. In terms of assembly, forms a stable heterodimer with ctc-1/pob3. The dimer of ctc-1 and ctc-2 weakly associates with multiple molecules of nhp-1/nhp6 to form the FACT complex.

The protein localises to the nucleus. It is found in the chromosome. Its function is as follows. Component of the FACT complex, a general chromatin factor that acts to reorganize nucleosomes. The FACT complex is involved in multiple processes that require DNA as a template such as mRNA elongation, DNA replication and DNA repair. During transcription elongation the FACT complex acts as a histone chaperone that both destabilizes and restores nucleosomal structure. It facilitates the passage of RNA polymerase II and transcription by promoting the dissociation of one histone H2A-H2B dimer from the nucleosome, then subsequently promotes the reestablishment of the nucleosome following the passage of RNA polymerase II. The sequence is that of FACT complex subunit ctc-2 (ctc-2) from Neurospora crassa (strain ATCC 24698 / 74-OR23-1A / CBS 708.71 / DSM 1257 / FGSC 987).